A 370-amino-acid chain; its full sequence is uncharacterized protein (370 aa).

Aspartate 152, histidine 154, aspartate 184, asparagine 215, histidine 306, and histidine 308 together coordinate a divalent metal cation.

Belongs to the metallophosphoesterase superfamily. The cofactor is a divalent metal cation.

This is an uncharacterized protein from Helicobacter pylori (strain J99 / ATCC 700824) (Campylobacter pylori J99).